The sequence spans 339 residues: UDP-N-acetylglucosamine--N-acetylmuramyl-(pentapeptide) pyrophosphoryl-undecaprenol N-acetylglucosamine transferase (339 aa).

Residues 11 to 13 (TGG), N127, R170, S188, I235, and Q280 contribute to the UDP-N-acetyl-alpha-D-glucosamine site.

This sequence belongs to the glycosyltransferase 28 family. MurG subfamily.

It localises to the cell inner membrane. The enzyme catalyses di-trans,octa-cis-undecaprenyl diphospho-N-acetyl-alpha-D-muramoyl-L-alanyl-D-glutamyl-meso-2,6-diaminopimeloyl-D-alanyl-D-alanine + UDP-N-acetyl-alpha-D-glucosamine = di-trans,octa-cis-undecaprenyl diphospho-[N-acetyl-alpha-D-glucosaminyl-(1-&gt;4)]-N-acetyl-alpha-D-muramoyl-L-alanyl-D-glutamyl-meso-2,6-diaminopimeloyl-D-alanyl-D-alanine + UDP + H(+). It participates in cell wall biogenesis; peptidoglycan biosynthesis. Cell wall formation. Catalyzes the transfer of a GlcNAc subunit on undecaprenyl-pyrophosphoryl-MurNAc-pentapeptide (lipid intermediate I) to form undecaprenyl-pyrophosphoryl-MurNAc-(pentapeptide)GlcNAc (lipid intermediate II). This Thermotoga sp. (strain RQ2) protein is UDP-N-acetylglucosamine--N-acetylmuramyl-(pentapeptide) pyrophosphoryl-undecaprenol N-acetylglucosamine transferase.